The sequence spans 173 residues: CKLF-like MARVEL transmembrane domain-containing protein 8 (173 aa).

One can recognise an MARVEL domain in the interval 36-168; that stretch reads FLRTPPGLLI…NTYFSFIAWR (133 aa). Helical transmembrane passes span 41 to 61, 70 to 90, 105 to 125, and 147 to 167; these read PGLL…LIAG, FGWV…FLIV, TTVG…AAIV, and FFAF…FIAW.

This sequence belongs to the chemokine-like factor family.

The protein resides in the membrane. The polypeptide is CKLF-like MARVEL transmembrane domain-containing protein 8 (Cmtm8) (Mus musculus (Mouse)).